Consider the following 762-residue polypeptide: FAST kinase domain-containing protein 5, mitochondrial (762 aa).

Phosphoserine is present on S95. K506 bears the N6-acetyllysine mark. In terms of domain architecture, RAP spans 695–755; that stretch reads LAIQFTNKNQ…RLEKLAYLHE (61 aa).

The protein belongs to the FAST kinase family. In terms of assembly, found in a complex with GRSF1, DDX28, DHX30 and FASTKD2. Associates with the 12S mitochondrial rRNA (12S mt-rRNA). In terms of tissue distribution, expression detected in spleen, testis, colon, heart, smooth muscle, kidney, brain, lung, liver, brown and white adipose tissue.

The protein resides in the mitochondrion matrix. It is found in the mitochondrion nucleoid. Plays an important role in the processing of non-canonical mitochondrial mRNA precursors. This is FAST kinase domain-containing protein 5, mitochondrial (Fastkd5) from Mus musculus (Mouse).